Here is a 366-residue protein sequence, read N- to C-terminus: tRNA-specific 2-thiouridylase MnmA (366 aa).

Residues 12–19 and Met-38 contribute to the ATP site; that span reads GMSGGVDS. An interaction with target base in tRNA region spans residues 98 to 100; sequence NPD. The active-site Nucleophile is the Cys-103. Residues Cys-103 and Cys-200 are joined by a disulfide bond. ATP is bound at residue Gly-128. An interaction with tRNA region spans residues 150–152; it reads KDQ. Cys-200 functions as the Cysteine persulfide intermediate in the catalytic mechanism. The segment at 312-313 is interaction with tRNA; sequence RY.

Belongs to the MnmA/TRMU family.

It localises to the cytoplasm. It carries out the reaction S-sulfanyl-L-cysteinyl-[protein] + uridine(34) in tRNA + AH2 + ATP = 2-thiouridine(34) in tRNA + L-cysteinyl-[protein] + A + AMP + diphosphate + H(+). Functionally, catalyzes the 2-thiolation of uridine at the wobble position (U34) of tRNA, leading to the formation of s(2)U34. This chain is tRNA-specific 2-thiouridylase MnmA, found in Pseudoalteromonas translucida (strain TAC 125).